The primary structure comprises 133 residues: Homeobox protein BarH-like 2 (133 aa).

Residues 1–46 (ELEKEFQKQKYLSTPDRLDLAQSLGLTQLQVKTWYQNRRMKWKKMV) constitute a DNA-binding region (homeobox). Residues 45–133 (MVLKGGQEAP…VTSPEPPPSS (89 aa)) form a disordered region.

This sequence belongs to the BAR homeobox family. Expressed in keratinizing epithelia such as wool follicle, tongue and esophagus. Expressed at low level in thymus. Not detected in spleen, skeletal muscle, brain, heart kidney, liver and lung.

The protein localises to the nucleus. Transcription factor. Binds optimally to the DNA consensus sequence 5'-YYTAATGRTTTTY-3'. May control the expression of neural adhesion molecules such as L1 or Ng-CAM during embryonic development of both the central and peripherical nervous system. May be involved in controlling adhesive processes in keratinizing epithelia. The sequence is that of Homeobox protein BarH-like 2 (BARX2) from Ovis aries (Sheep).